Here is a 549-residue protein sequence, read N- to C-terminus: Oxygen-dependent choline dehydrogenase (549 aa).

4–33 (DYVIVGSGSAGSAIAYRLSEDGRYSVIVIE) serves as a coordination point for FAD. His465 (proton acceptor) is an active-site residue. Positions 528–549 (KTPLPRSNQEPWVNPRAAVSDR) are disordered.

It belongs to the GMC oxidoreductase family. The cofactor is FAD.

The catalysed reaction is choline + A = betaine aldehyde + AH2. The enzyme catalyses betaine aldehyde + NAD(+) + H2O = glycine betaine + NADH + 2 H(+). Its pathway is amine and polyamine biosynthesis; betaine biosynthesis via choline pathway; betaine aldehyde from choline (cytochrome c reductase route): step 1/1. In terms of biological role, involved in the biosynthesis of the osmoprotectant glycine betaine. Catalyzes the oxidation of choline to betaine aldehyde and betaine aldehyde to glycine betaine at the same rate. This Agrobacterium fabrum (strain C58 / ATCC 33970) (Agrobacterium tumefaciens (strain C58)) protein is Oxygen-dependent choline dehydrogenase.